We begin with the raw amino-acid sequence, 790 residues long: Pre-mRNA-splicing factor cwf3 (790 aa).

17 HAT repeats span residues 12–44 (DLIN…THEG), 45–77 (STLE…LRVA), 89–121 (EAFA…FLMK), 123–157 (PNVT…YAED), 159–190 (GGLF…KLGL), 193–228 (EAAR…LVVQ), 233–266 (TQNI…YYIR), 268–303 (GDYE…FEEQ), 331–364 (KILD…FLED), 368–402 (KVVQ…FYEN), 404–440 (DDLE…MELR), 457–492 (APRK…LEES), 494–526 (GTIE…LLEE), 528–562 (AYFE…KFVK), 567–601 (THME…FEEK), 639–673 (YGVL…METK), and 675–709 (GEID…FEIR). The segment at 769 to 790 (LAGFVLSKSNPQETSKITGEEN) is disordered. Residues 775–790 (SKSNPQETSKITGEEN) show a composition bias toward polar residues.

Belongs to the crooked-neck family. As to quaternary structure, belongs to the 40S cdc5-associated complex (or cwf complex), a spliceosome sub-complex reminiscent of a late-stage spliceosome composed of the U2, U5 and U6 snRNAs and at least brr2, cdc5, cwf2/prp3, cwf3/syf1, cwf4/syf3, cwf5/ecm2, spp42/cwf6, cwf7/spf27, cwf8, cwf9, cwf10, cwf11, cwf12, prp45/cwf13, cwf14, cwf15, cwf16, cwf17, cwf18, cwf19, cwf20, cwf21, cwf22, cwf23, cwf24, cwf25, cwf26, cyp7/cwf27, cwf28, cwf29/ist3, lea1, msl1, prp5/cwf1, prp10, prp12/sap130, prp17, prp22, sap61, sap62, sap114, sap145, slu7, smb1, smd1, smd3, smf1, smg1 and syf2.

Its subcellular location is the nucleus. Functionally, involved in pre-mRNA splicing and cell cycle progression. The protein is Pre-mRNA-splicing factor cwf3 (cwf3) of Schizosaccharomyces pombe (strain 972 / ATCC 24843) (Fission yeast).